Consider the following 40-residue polypeptide: MADTTGRIPLWLISTVTGTLVIGLMGIFFYGSYSGLGSSL.

The chain crosses the membrane as a helical span at residues 8–28 (IPLWLISTVTGTLVIGLMGIF).

It belongs to the PsbJ family. In terms of assembly, PSII is composed of 1 copy each of membrane proteins PsbA, PsbB, PsbC, PsbD, PsbE, PsbF, PsbH, PsbI, PsbJ, PsbK, PsbL, PsbM, PsbT, PsbX, PsbY, PsbZ, Psb30/Ycf12, at least 3 peripheral proteins of the oxygen-evolving complex and a large number of cofactors. It forms dimeric complexes.

The protein resides in the plastid. The protein localises to the chloroplast thylakoid membrane. In terms of biological role, one of the components of the core complex of photosystem II (PSII). PSII is a light-driven water:plastoquinone oxidoreductase that uses light energy to abstract electrons from H(2)O, generating O(2) and a proton gradient subsequently used for ATP formation. It consists of a core antenna complex that captures photons, and an electron transfer chain that converts photonic excitation into a charge separation. The polypeptide is Photosystem II reaction center protein J (Ginkgo biloba (Ginkgo)).